Consider the following 283-residue polypeptide: Probable endonuclease 4 (283 aa).

Residues His-66, His-106, Glu-141, Asp-174, His-177, His-211, Asp-224, His-226, and Glu-256 each coordinate Zn(2+).

Belongs to the AP endonuclease 2 family. Requires Zn(2+) as cofactor.

The catalysed reaction is Endonucleolytic cleavage to 5'-phosphooligonucleotide end-products.. In terms of biological role, endonuclease IV plays a role in DNA repair. It cleaves phosphodiester bonds at apurinic or apyrimidinic (AP) sites, generating a 3'-hydroxyl group and a 5'-terminal sugar phosphate. The chain is Probable endonuclease 4 from Carboxydothermus hydrogenoformans (strain ATCC BAA-161 / DSM 6008 / Z-2901).